An 88-amino-acid polypeptide reads, in one-letter code: Small ribosomal subunit protein bS16 (88 aa).

This sequence belongs to the bacterial ribosomal protein bS16 family.

The polypeptide is Small ribosomal subunit protein bS16 (Geotalea daltonii (strain DSM 22248 / JCM 15807 / FRC-32) (Geobacter daltonii)).